We begin with the raw amino-acid sequence, 150 residues long: Large ribosomal subunit protein uL15 (150 aa).

Basic and acidic residues predominate over residues 1-13 (MADNDAIKVHDLR). The interval 1–44 (MADNDAIKVHDLRPAPGAKTAKTRVGRGEASKGKTAGRGTKGTK) is disordered.

The protein belongs to the universal ribosomal protein uL15 family. Part of the 50S ribosomal subunit.

Binds to the 23S rRNA. The protein is Large ribosomal subunit protein uL15 of Micrococcus luteus (strain ATCC 4698 / DSM 20030 / JCM 1464 / CCM 169 / CCUG 5858 / IAM 1056 / NBRC 3333 / NCIMB 9278 / NCTC 2665 / VKM Ac-2230) (Micrococcus lysodeikticus).